We begin with the raw amino-acid sequence, 132 residues long: Small ribosomal subunit protein uS8 (132 aa).

This sequence belongs to the universal ribosomal protein uS8 family. In terms of assembly, part of the 30S ribosomal subunit. Contacts proteins S5 and S12.

Functionally, one of the primary rRNA binding proteins, it binds directly to 16S rRNA central domain where it helps coordinate assembly of the platform of the 30S subunit. This Clostridium botulinum (strain 657 / Type Ba4) protein is Small ribosomal subunit protein uS8.